Here is a 426-residue protein sequence, read N- to C-terminus: Inhibin beta A chain (426 aa).

An N-terminal signal peptide occupies residues 1–20 (MPLLWLRGFLLASCWIIVRS). Positions 21–310 (SPTPGSEGHS…EDHPHRRRRR (290 aa)) are excised as a propeptide. N-linked (GlcNAc...) asparagine glycosylation is present at Asn165. Positions 259-288 (KKKKKEEEGEGKKKGGGEGGAGADEEKEQS) are disordered. The span at 263-274 (KEEEGEGKKKGG) shows a compositional bias: basic and acidic residues. Intrachain disulfides connect Cys314–Cys322, Cys321–Cys391, Cys350–Cys423, and Cys354–Cys425.

Belongs to the TGF-beta family. Dimeric, linked by one or more disulfide bonds. Inhibin A is a dimer of alpha/INHA and beta-A/INHBA. Activin A is a homodimer of beta-A/INHBA. Activin AB is a dimer of beta-A/INHBA and beta-B/INHBB. Interacts with FST and FSTL3; these interactions prevent activin A interaction to its type II receptor. Activin A interacts with ACVR2A. Activin A interacts with BMPR2. Inhibin A interacts with ACVR1; this interaction creates a non-signaling complex (NSC) that inhibits ACVR1-mediated BMP signaling. Inhibin A interacts with ACVR2A.

The protein resides in the secreted. Functionally, inhibins/activins are involved in regulating a number of diverse functions such as hypothalamic and pituitary hormone secretion, gonadal hormone secretion, germ cell development and maturation, erythroid differentiation, insulin secretion, nerve cell survival, embryonic axial development or bone growth, depending on their subunit composition. Its function is as follows. Activin A is a homodimer of INHBA that plays a role in several essential biological processes including embryonic development, stem cell maintenance and differentiation, haematopoiesis, cell proliferation and tissue fibrosis. Signals through type I (such as ACVR1B or ACVR1C) and type II receptors (such as ACVR2A, ACVR2B or BMPR2) which, upon ligand binding, phosphorylate SMAD2 and SMAD3 intracellular signaling mediators that form a complex with SMAD4, translocate to the nucleus and modulate gene expression. Can also activate alternative non-canonical intracellular signaling pathways including the p38 MAPK, extracellular signal-regulated kinases 1/2 (ERK1/2) and c-Jun N-terminal kinases (JNKs) to modulate cell migration and differentiation. Alternatively, promotes osteoblastic differentiation via ACVRL1-SMAD1/5/9 pathway. In addition, can engage the type I receptor ACVR1 to form an ACVR1-activin A-type II receptor non-signaling complex (NSC) that renders receptors unavailable for engagement with BMPs, hence resulting in an apparent inhibition of ACVR1-mediated BMP signaling. Inhibin A is a dimer of alpha/INHA and beta-A/INHBA that functions as a feedback regulator in the hypothalamic-pituitary-gonadal (HPG) axis. Inhibits the secretion of FSH from the anterior pituitary gland by acting on pituitary gonadotrope cells. Antagonizes activin A by binding to the proteoglycan, betaglycan, and forming a stable complex with and, thereby, sequestering type II activin receptors while excluding type I receptor. The sequence is that of Inhibin beta A chain (INHBA) from Homo sapiens (Human).